Consider the following 283-residue polypeptide: NAD kinase (283 aa).

Asp66 functions as the Proton acceptor in the catalytic mechanism. Residues 66-67, Arg71, 137-138, His165, Asp167, and 178-183 contribute to the NAD(+) site; these read DG, ND, and TGYSMS.

The protein belongs to the NAD kinase family. It depends on a divalent metal cation as a cofactor.

The protein localises to the cytoplasm. The enzyme catalyses NAD(+) + ATP = ADP + NADP(+) + H(+). Functionally, involved in the regulation of the intracellular balance of NAD and NADP, and is a key enzyme in the biosynthesis of NADP. Catalyzes specifically the phosphorylation on 2'-hydroxyl of the adenosine moiety of NAD to yield NADP. This Agathobacter rectalis (strain ATCC 33656 / DSM 3377 / JCM 17463 / KCTC 5835 / VPI 0990) (Eubacterium rectale) protein is NAD kinase.